Reading from the N-terminus, the 553-residue chain is Protein TIC 55, chloroplastic (553 aa).

The transit peptide at 1–60 (MALALASANSFLLPTKTHFALHVSPPPSKKTLLCTNPSSNFSFNKALSSRRRKQAWCVAA) directs the protein to the chloroplast. The Stromal portion of the chain corresponds to 61 to 492 (AADVKDATLL…GCSSAIKAFQ (432 aa)). A Rieske domain is found at 103 to 208 (WYPLYLTKNV…VRDSQGVLWV (106 aa)). [2Fe-2S] cluster is bound by residues Cys-144, His-146, Cys-163, and His-166. Residues His-257 and His-262 each contribute to the Fe cation site. A helical transmembrane segment spans residues 493–513 (IWKNVLSGVVVALAALAILVS). Residues 514–518 (GRQWK) lie on the Chloroplast intermembrane side of the membrane. Residues 519–539 (VLLLASASLCSVGVYACSTAI) traverse the membrane as a helical segment. Residues 540–553 (AMNTTNFIRVHRRL) are Stromal-facing.

Part of the Tic complex. Interacts with TIC62 and TIC110. [2Fe-2S] cluster is required as a cofactor.

It is found in the plastid. The protein resides in the chloroplast inner membrane. Functionally, involved in protein precursor import into chloroplasts. Part of the redox regulon consisting of TIC32, TIC 55 and TIC62. The protein is Protein TIC 55, chloroplastic (TIC55) of Pisum sativum (Garden pea).